Consider the following 20-residue polypeptide: Cytochrome c oxidase subunit 7B-liver, mitochondrial (20 aa).

Belongs to the cytochrome c oxidase VIIb family. As to quaternary structure, component of the cytochrome c oxidase (complex IV, CIV), a multisubunit enzyme composed of 14 subunits. The complex is composed of a catalytic core of 3 subunits MT-CO1, MT-CO2 and MT-CO3, encoded in the mitochondrial DNA, and 11 supernumerary subunits COX4I, COX5A, COX5B, COX6A, COX6B, COX6C, COX7A, COX7B, COX7C, COX8 and NDUFA4, which are encoded in the nuclear genome. The complex exists as a monomer or a dimer and forms supercomplexes (SCs) in the inner mitochondrial membrane with NADH-ubiquinone oxidoreductase (complex I, CI) and ubiquinol-cytochrome c oxidoreductase (cytochrome b-c1 complex, complex III, CIII), resulting in different assemblies (supercomplex SCI(1)III(2)IV(1) and megacomplex MCI(2)III(2)IV(2)).

It localises to the mitochondrion inner membrane. It catalyses the reaction 4 Fe(II)-[cytochrome c] + O2 + 8 H(+)(in) = 4 Fe(III)-[cytochrome c] + 2 H2O + 4 H(+)(out). It functions in the pathway energy metabolism; oxidative phosphorylation. Functionally, component of the cytochrome c oxidase, the last enzyme in the mitochondrial electron transport chain which drives oxidative phosphorylation. The respiratory chain contains 3 multisubunit complexes succinate dehydrogenase (complex II, CII), ubiquinol-cytochrome c oxidoreductase (cytochrome b-c1 complex, complex III, CIII) and cytochrome c oxidase (complex IV, CIV), that cooperate to transfer electrons derived from NADH and succinate to molecular oxygen, creating an electrochemical gradient over the inner membrane that drives transmembrane transport and the ATP synthase. Cytochrome c oxidase is the component of the respiratory chain that catalyzes the reduction of oxygen to water. Electrons originating from reduced cytochrome c in the intermembrane space (IMS) are transferred via the dinuclear copper A center (CU(A)) of subunit 2 and heme A of subunit 1 to the active site in subunit 1, a binuclear center (BNC) formed by heme A3 and copper B (CU(B)). The BNC reduces molecular oxygen to 2 water molecules using 4 electrons from cytochrome c in the IMS and 4 protons from the mitochondrial matrix. This Thunnus obesus (Bigeye tuna) protein is Cytochrome c oxidase subunit 7B-liver, mitochondrial.